Reading from the N-terminus, the 41-residue chain is Fibrinogen beta chain (41 aa).

A disordered region spans residues 1–41 (ADDYDDEVLPDARGHRPIDRKREELPSLRPAPPPISGGGYR). A Sulfotyrosine modification is found at Tyr-4. Positions 10–26 (PDARGHRPIDRKREELP) are enriched in basic and acidic residues. Residues 14-16 (GHR) are beta-chain polymerization, binding distal domain of another fibrin.

As to quaternary structure, heterohexamer; disulfide linked. Contains 2 sets of 3 non-identical chains (alpha, beta and gamma). The 2 heterotrimers are in head to head conformation with the N-termini in a small central domain. Conversion of fibrinogen to fibrin is triggered by thrombin, which cleaves fibrinopeptides A and B from alpha and beta chains, and thus exposes the N-terminal polymerization sites responsible for the formation of the soft clot.

The protein localises to the secreted. Its function is as follows. Cleaved by the protease thrombin to yield monomers which, together with fibrinogen alpha (FGA) and fibrinogen gamma (FGG), polymerize to form an insoluble fibrin matrix. Fibrin has a major function in hemostasis as one of the primary components of blood clots. In addition, functions during the early stages of wound repair to stabilize the lesion and guide cell migration during re-epithelialization. Was originally thought to be essential for platelet aggregation, based on in vitro studies using anticoagulated blood. However subsequent studies have shown that it is not absolutely required for thrombus formation in vivo. Enhances expression of SELP in activated platelets. Maternal fibrinogen is essential for successful pregnancy. Fibrin deposition is also associated with infection, where it protects against IFNG-mediated hemorrhage. May also facilitate the antibacterial immune response via both innate and T-cell mediated pathways. This is Fibrinogen beta chain (FGB) from Oryctolagus cuniculus (Rabbit).